The primary structure comprises 440 residues: uncharacterized protein (440 aa).

10 consecutive transmembrane segments (helical) span residues 26 to 46 (NGLI…SSTF), 59 to 79 (FVFW…NGVL), 96 to 116 (FFLG…LKLK), 138 to 158 (LTLS…SIYL), 211 to 231 (FLVF…YLFA), 241 to 261 (LRKP…VGII), 263 to 283 (WIII…FVIF), 284 to 304 (WVIK…SLTI), 394 to 414 (FLII…SVFI), and 418 to 438 (IVQI…FTFI).

To M.pneumoniae MPN_087.

It localises to the cell membrane. This is an uncharacterized protein from Mycoplasma pneumoniae (strain ATCC 29342 / M129 / Subtype 1) (Mycoplasmoides pneumoniae).